Here is a 153-residue protein sequence, read N- to C-terminus: Histone H2B.6 (153 aa).

Composition is skewed to basic and acidic residues over residues 1–28 and 36–53; these read MAPKAEKKPAAKKPAEEEPAAEKAEKAP and EKRLPAGKGEKGSGEGKK. A disordered region spans residues 1 to 60; it reads MAPKAEKKPAAKKPAEEEPAAEKAEKAPAGKKPKAEKRLPAGKGEKGSGEGKKAGRKKGK. N6-acetyllysine is present on residues lysine 7 and lysine 37. A Glycyl lysine isopeptide (Lys-Gly) (interchain with G-Cter in ubiquitin) cross-link involves residue lysine 149.

The protein belongs to the histone H2B family. In terms of assembly, the nucleosome is a histone octamer containing two molecules each of H2A, H2B, H3 and H4 assembled in one H3-H4 heterotetramer and two H2A-H2B heterodimers. The octamer wraps approximately 147 bp of DNA. In terms of processing, can be acetylated to form H2BK6ac and H2BK33ac. Monoubiquitinated by BRE1 to form H2BK143ub1 and deubiquitinated by UBP26. Required for heterochromatic histone H3 di- and trimethylation at H3K4me. May give a specific tag for epigenetic transcriptional activation.

Its subcellular location is the nucleus. It is found in the chromosome. Core component of nucleosome. Nucleosomes wrap and compact DNA into chromatin, limiting DNA accessibility to the cellular machineries which require DNA as a template. Histones thereby play a central role in transcription regulation, DNA repair, DNA replication and chromosomal stability. DNA accessibility is regulated via a complex set of post-translational modifications of histones, also called histone code, and nucleosome remodeling. The sequence is that of Histone H2B.6 (H2B.6) from Oryza sativa subsp. indica (Rice).